The chain runs to 237 residues: Orotidine 5'-phosphate decarboxylase (237 aa).

Substrate-binding positions include D11, K34, 61-70 (DLKLHDIPNT), T123, R185, Q194, G214, and R215. Residue K63 is the Proton donor of the active site.

Belongs to the OMP decarboxylase family. Type 1 subfamily. Homodimer.

It catalyses the reaction orotidine 5'-phosphate + H(+) = UMP + CO2. It functions in the pathway pyrimidine metabolism; UMP biosynthesis via de novo pathway; UMP from orotate: step 2/2. Its function is as follows. Catalyzes the decarboxylation of orotidine 5'-monophosphate (OMP) to uridine 5'-monophosphate (UMP). In Ligilactobacillus salivarius (strain UCC118) (Lactobacillus salivarius), this protein is Orotidine 5'-phosphate decarboxylase.